A 236-amino-acid polypeptide reads, in one-letter code: Small ribosomal subunit protein uS2c (236 aa).

It belongs to the universal ribosomal protein uS2 family.

The protein localises to the plastid. The protein resides in the chloroplast. This Agrostis stolonifera (Creeping bentgrass) protein is Small ribosomal subunit protein uS2c (rps2).